A 254-amino-acid polypeptide reads, in one-letter code: 5-oxoprolinase subunit A (254 aa).

This sequence belongs to the LamB/PxpA family. In terms of assembly, forms a complex composed of PxpA, PxpB and PxpC.

The enzyme catalyses 5-oxo-L-proline + ATP + 2 H2O = L-glutamate + ADP + phosphate + H(+). Its function is as follows. Catalyzes the cleavage of 5-oxoproline to form L-glutamate coupled to the hydrolysis of ATP to ADP and inorganic phosphate. This is 5-oxoprolinase subunit A from Heliobacterium modesticaldum (strain ATCC 51547 / Ice1).